We begin with the raw amino-acid sequence, 300 residues long: UDP-3-O-acyl-N-acetylglucosamine deacetylase (300 aa).

3 residues coordinate Zn(2+): histidine 78, histidine 237, and aspartate 241. Histidine 264 serves as the catalytic Proton donor.

Belongs to the LpxC family. The cofactor is Zn(2+).

It catalyses the reaction a UDP-3-O-[(3R)-3-hydroxyacyl]-N-acetyl-alpha-D-glucosamine + H2O = a UDP-3-O-[(3R)-3-hydroxyacyl]-alpha-D-glucosamine + acetate. It functions in the pathway glycolipid biosynthesis; lipid IV(A) biosynthesis; lipid IV(A) from (3R)-3-hydroxytetradecanoyl-[acyl-carrier-protein] and UDP-N-acetyl-alpha-D-glucosamine: step 2/6. Its function is as follows. Catalyzes the hydrolysis of UDP-3-O-myristoyl-N-acetylglucosamine to form UDP-3-O-myristoylglucosamine and acetate, the committed step in lipid A biosynthesis. In Acinetobacter baumannii (strain ATCC 17978 / DSM 105126 / CIP 53.77 / LMG 1025 / NCDC KC755 / 5377), this protein is UDP-3-O-acyl-N-acetylglucosamine deacetylase.